Reading from the N-terminus, the 427-residue chain is 3-phosphoshikimate 1-carboxyvinyltransferase (427 aa).

Residues lysine 20, serine 21, and arginine 25 each coordinate 3-phosphoshikimate. Lysine 20 serves as a coordination point for phosphoenolpyruvate. 2 residues coordinate phosphoenolpyruvate: glycine 92 and arginine 120. 4 residues coordinate 3-phosphoshikimate: serine 166, glutamine 168, aspartate 312, and lysine 339. Glutamine 168 lines the phosphoenolpyruvate pocket. The Proton acceptor role is filled by aspartate 312. Residues arginine 343 and arginine 385 each contribute to the phosphoenolpyruvate site.

It belongs to the EPSP synthase family. As to quaternary structure, monomer.

It is found in the cytoplasm. It carries out the reaction 3-phosphoshikimate + phosphoenolpyruvate = 5-O-(1-carboxyvinyl)-3-phosphoshikimate + phosphate. It functions in the pathway metabolic intermediate biosynthesis; chorismate biosynthesis; chorismate from D-erythrose 4-phosphate and phosphoenolpyruvate: step 6/7. Catalyzes the transfer of the enolpyruvyl moiety of phosphoenolpyruvate (PEP) to the 5-hydroxyl of shikimate-3-phosphate (S3P) to produce enolpyruvyl shikimate-3-phosphate and inorganic phosphate. The sequence is that of 3-phosphoshikimate 1-carboxyvinyltransferase from Streptococcus thermophilus (strain ATCC BAA-491 / LMD-9).